A 429-amino-acid chain; its full sequence is Small ribosomal subunit protein uS5m (429 aa).

Residues Ala108–Asn127 are disordered. The segment covering Lys111–Asp125 has biased composition (basic residues). The S5 DRBM domain occupies Phe218–Ile282.

Belongs to the universal ribosomal protein uS5 family. In terms of assembly, component of the mitochondrial ribosome small subunit (28S) which comprises a 12S rRNA and about 30 distinct proteins.

Its subcellular location is the mitochondrion. The polypeptide is Small ribosomal subunit protein uS5m (MRPS5) (Pongo abelii (Sumatran orangutan)).